Consider the following 241-residue polypeptide: Uridylate kinase (241 aa).

ATP is bound at residue 15–18; that stretch reads KLSG. Residues 23-28 are involved in allosteric activation by GTP; sequence GSEGFG. Gly57 is a binding site for UMP. Positions 58 and 62 each coordinate ATP. UMP is bound by residues Asp77 and 138–145; that span reads TGNPFFTT. The ATP site is built by Thr165, Phe171, and Asp174.

Belongs to the UMP kinase family. Homohexamer.

It localises to the cytoplasm. It carries out the reaction UMP + ATP = UDP + ADP. It participates in pyrimidine metabolism; CTP biosynthesis via de novo pathway; UDP from UMP (UMPK route): step 1/1. With respect to regulation, allosterically activated by GTP. Inhibited by UTP. In terms of biological role, catalyzes the reversible phosphorylation of UMP to UDP. The protein is Uridylate kinase of Klebsiella pneumoniae subsp. pneumoniae (strain ATCC 700721 / MGH 78578).